The primary structure comprises 576 residues: Keratin, type II cytoskeletal 5 (576 aa).

The interval 1 to 163 (MSRQSSVSFR…DPTIQRVRTE (163 aa)) is head. Residues Ser-5, Ser-8, Ser-16, and Ser-21 each carry the phosphoserine modification. Thr-24 carries the phosphothreonine; by CDK1 modification. Phosphoserine is present on residues Ser-26, Ser-36, Ser-46, Ser-60, Ser-67, Ser-71, Ser-74, and Ser-78. Thr-147 carries the phosphothreonine; by CDK1 modification. Thr-162 carries the phosphothreonine; by AURKB modification. The coil 1A stretch occupies residues 164–199 (EREQIKTLNNKFASFIDKVRFLEQQNKVLDTKWTLL). In terms of domain architecture, IF rod spans 164–477 (EREQIKTLNN…KLLEGEECRL (314 aa)). The interval 200–218 (QEQGTKTIKQNLDPLFEQY) is linker 1. The interval 219 to 311 (INNLRRQLDG…FFDAELSQMQ (93 aa)) is coil 1B. The interval 312–334 (THVSDTSVVLSMDNNRSLDLDSI) is linker 12. The tract at residues 335–473 (IAEVKAQYED…ATYRKLLEGE (139 aa)) is coil 2. A tail region spans residues 474-576 (ECRLSGEGVG…TSSSRRSFKS (103 aa)). Position 527 is an omega-N-methylarginine (Arg-527). Residues 540 to 557 (GFSASSGQGGGFSSGGGS) are compositionally biased toward gly residues. The interval 540–576 (GFSASSGQGGGFSSGGGSSSSVKFVSTTSSSRRSFKS) is disordered. The segment covering 558–576 (SSSVKFVSTTSSSRRSFKS) has biased composition (low complexity).

Belongs to the intermediate filament family. Heterodimer of a type I and a type II keratin. Heterodimer with type I keratin KRT25 leading to the formation of keratin intermediate filament (KIF) network. Forms a heterodimer (via 2B domains) with KRT14 (via 2B domains). Interacts with TCHP. Interacts with EPPK1. Interacts with AMELX. Interacts with PKP1 (via N-terminus) and PKP2. Post-translationally, phosphorylated by CDK1, AURKB and Rho-kinase, phosphorylation is regulated by the cell cycle. Thr-24 phosphorylation, mediated by CDK1, peaks during prometaphase or metaphase cells with phosphorylated filamentous structures evident throughout the cytoplasm during early mitosis. CDK1 phosphorylates Thr-24 in mitotic cells at the site of injury. In terms of processing, O-glycosylated. In terms of tissue distribution, expressed in the epidermis (at protein level) and testis (within pachytene spermatocytes).

It localises to the cytoplasm. Required for the formation of keratin intermediate filaments in the basal epidermis and maintenance of the skin barrier in response to mechanical stress. Regulates the recruitment of Langerhans cells to the epidermis, potentially by modulation of the abundance of macrophage chemotactic cytokines, macrophage inflammatory cytokines and CTNND1 localization in keratinocytes. The protein is Keratin, type II cytoskeletal 5 of Rattus norvegicus (Rat).